Reading from the N-terminus, the 439-residue chain is MRSTELVQWFRQSTPYVNMHRGKTFVIMLDGNTIASSNFINIINDISLLHSLGIKLIIVYGARVQINSLLAQNNVTSVYHKNIRVTDPRTLELVKQAVGQLSYDITARLSVRLPHSPVLNVVSSNFILAQPIGVDDGVDYMLSGKIRRIEIDNIKHHLDNNAIVLLGPIAPSVTGETFNLPFEEIATQVAIKLKAEKLIGFSSTQGILDPQGISIPDLLPQDAAKYLNQYIQQGEYHCSQARFLQAAIEVCKAGVKRSHLLSYEEDGSLLQELFTRDGVGTQLSVDNSEDIRIATVQDIPGLIELIHPLEQQGILVKRSREQLEMDIANYTIIDRDGVIIACAALNQYPEENMAEMACVAVHPDYRSSSRGDILLEAIQKRARQLGIEKLFVLTTRTVHWFQERGFRLANVEDLPKEKRDHYNYQRRSKILIQPLNEEE.

The 141-residue stretch at 289-429 (EDIRIATVQD…DHYNYQRRSK (141 aa)) folds into the N-acetyltransferase domain.

It belongs to the acetyltransferase family. ArgA subfamily.

It is found in the cytoplasm. The enzyme catalyses L-glutamate + acetyl-CoA = N-acetyl-L-glutamate + CoA + H(+). It functions in the pathway amino-acid biosynthesis; L-arginine biosynthesis; N(2)-acetyl-L-ornithine from L-glutamate: step 1/4. This Mannheimia succiniciproducens (strain KCTC 0769BP / MBEL55E) protein is Amino-acid acetyltransferase.